The sequence spans 248 residues: 3,4-dihydroxyphthalate decarboxylase (248 aa).

E90 serves as the catalytic Proton donor/acceptor. Residues E90, H109, H111, and H177 each coordinate a divalent metal cation.

It belongs to the aldolase class II family. The cofactor is a divalent metal cation.

The enzyme catalyses 3,4-dihydroxyphthalate + H(+) = 3,4-dihydroxybenzoate + CO2. The protein operates within xenobiotic degradation; phthalate degradation. In terms of biological role, catalyzes the decarboxylation of 3,4-dihydroxyphthalate to protocatechuate (3,4-dihydroxybenzoate) during phthalate metabolism. The chain is 3,4-dihydroxyphthalate decarboxylase from Arthrobacter keyseri.